The chain runs to 992 residues: Aminopeptidase Q (992 aa).

The Cytoplasmic segment spans residues 2 to 13; that stretch reads GPPSSSGFYVSR. Residues 14–34 traverse the membrane as a helical; Signal-anchor for type II membrane protein segment; that stretch reads AVALLLAALAAALLLALAVLA. The Extracellular segment spans residues 35–992; that stretch reads ALYGRCARVQ…RMTAWLRKNT (958 aa). A disordered region spans residues 48 to 92; sequence LHHGGVPDAASSPRGTQEEQLPTWPPRPTREPAGTATPGHWRPPG. Asparagine 133 is a glycosylation site (N-linked (GlcNAc...) asparagine). A substrate-binding site is contributed by glutamate 241. Residues asparagine 262, asparagine 289, asparagine 347, and asparagine 361 are each glycosylated (N-linked (GlcNAc...) asparagine). 380–384 contributes to the substrate binding site; it reads SAMEN. Histidine 416 contacts Zn(2+). Glutamate 417 functions as the Proton acceptor in the catalytic mechanism. Histidine 420 and glutamate 439 together coordinate Zn(2+). N-linked (GlcNAc...) asparagine glycosylation occurs at asparagine 489. The active-site Proton donor is the tyrosine 505. N-linked (GlcNAc...) asparagine glycans are attached at residues asparagine 584, asparagine 602, asparagine 609, asparagine 655, asparagine 811, asparagine 850, and asparagine 889.

It belongs to the peptidase M1 family. Zn(2+) is required as a cofactor. As to expression, expressed in skin. Expression levels do not differ between dark and light skin areas.

It is found in the membrane. Metalloprotease which may be important for placentation by regulating biological activity of key peptides at the embryo-maternal interface. Involved in coat pigmentation patterns. During skin development, may be required to establish the periodicity of tabby markings, initiating a pre-pattern at or before hair follicle development. The sequence is that of Aminopeptidase Q (LVRN) from Acinonyx jubatus (Cheetah).